Reading from the N-terminus, the 368-residue chain is D-Ala-D/L-Ala epimerase (368 aa).

Substrate-binding positions include threonine 135 and 160 to 162 (KVK). Mg(2+)-binding residues include aspartate 190, glutamate 216, and aspartate 241. Substrate-binding positions include lysine 265 and 318–320 (DFD).

This sequence belongs to the mandelate racemase/muconate lactonizing enzyme family. Mg(2+) is required as a cofactor.

Its function is as follows. Catalyzes the epimerization of D-Ala-D-Ala to D-Ala-L-Ala. Has broad substrate specificity and catalyzes the epimerization of a variety of dipeptides containing an N-terminal Ala followed by a hydrophobic or polar residue, such as Val, Ser and Met (in vitro). The protein is D-Ala-D/L-Ala epimerase (tfdD) of Cytophaga hutchinsonii (strain ATCC 33406 / DSM 1761 / CIP 103989 / NBRC 15051 / NCIMB 9469 / D465).